A 343-amino-acid chain; its full sequence is D-beta-hydroxybutyrate dehydrogenase, mitochondrial (343 aa).

Residues 1–46 (MLAARLSRPLSQLPGKALSVCDRENGTRHTLLFYPASFSPDTRRTY) constitute a mitochondrion transit peptide. 59-83 (LVTGCDSGFGFSLAKHLHSKGFLVF) is an NAD(+) binding site. At Lys73 the chain carries N6-acetyllysine. Lys103 carries the post-translational modification N6-acetyllysine; alternate. Lys103 bears the N6-succinyllysine; alternate mark. Lys132 and Lys177 each carry N6-acetyllysine. Ser195 contributes to the substrate binding site. Catalysis depends on Tyr208, which acts as the Proton acceptor. Position 212 is an N6-acetyllysine (Lys212). Ser219 carries an O-linked (GlcNAc) serine glycan. Ser246 carries the post-translational modification Phosphoserine. Lys258 carries the post-translational modification N6-acetyllysine. Lys259 is subject to N6-acetyllysine; alternate. The residue at position 259 (Lys259) is an N6-succinyllysine; alternate. N6-acetyllysine is present on Lys280.

This sequence belongs to the short-chain dehydrogenases/reductases (SDR) family. As to quaternary structure, homotetramer. In terms of tissue distribution, expressed in liver.

It is found in the mitochondrion inner membrane. The protein localises to the mitochondrion matrix. It catalyses the reaction (R)-3-hydroxybutanoate + NAD(+) = acetoacetate + NADH + H(+). With respect to regulation, requires phosphatidylcholine as an allosteric activator for enzymatic activity. In Rattus norvegicus (Rat), this protein is D-beta-hydroxybutyrate dehydrogenase, mitochondrial.